Reading from the N-terminus, the 285-residue chain is Bifunctional protein FolD (285 aa).

Residues 165 to 167 and Ser190 contribute to the NADP(+) site; that span reads GRS.

Belongs to the tetrahydrofolate dehydrogenase/cyclohydrolase family. In terms of assembly, homodimer.

It carries out the reaction (6R)-5,10-methylene-5,6,7,8-tetrahydrofolate + NADP(+) = (6R)-5,10-methenyltetrahydrofolate + NADPH. It catalyses the reaction (6R)-5,10-methenyltetrahydrofolate + H2O = (6R)-10-formyltetrahydrofolate + H(+). It participates in one-carbon metabolism; tetrahydrofolate interconversion. Catalyzes the oxidation of 5,10-methylenetetrahydrofolate to 5,10-methenyltetrahydrofolate and then the hydrolysis of 5,10-methenyltetrahydrofolate to 10-formyltetrahydrofolate. This Staphylococcus saprophyticus subsp. saprophyticus (strain ATCC 15305 / DSM 20229 / NCIMB 8711 / NCTC 7292 / S-41) protein is Bifunctional protein FolD.